The chain runs to 352 residues: Protein Wnt-2 (352 aa).

The first 23 residues, methionine 1–serine 23, serve as a signal peptide directing secretion. 11 cysteine pairs are disulfide-bonded: cysteine 65–cysteine 76, cysteine 115–cysteine 123, cysteine 125–cysteine 148, cysteine 196–cysteine 210, cysteine 198–cysteine 205, cysteine 281–cysteine 312, cysteine 297–cysteine 307, cysteine 311–cysteine 351, cysteine 327–cysteine 342, cysteine 329–cysteine 339, and cysteine 334–cysteine 335. 2 N-linked (GlcNAc...) asparagine glycosylation sites follow: asparagine 75 and asparagine 119. Serine 202 is lipidated: O-palmitoleoyl serine; by PORCN.

Belongs to the Wnt family. Palmitoleoylated by porcupine. The lipid group functions as a sorting signal, targeting the ligand to polarized vesicles that transport Wnt2 to unique sites at the cell surface. Depalmitoleoylated by notum, leading to inhibit Wnt signaling pathway. Dynamic expression pattern during embryogenesis. Expression is predominantly segmented, with expression also seen in the limb primordia and presumptive gonads. In embryonic tracheal cells, expression is close to and dorsal to the tracheal placode.

Its subcellular location is the secreted. It is found in the extracellular space. The protein localises to the extracellular matrix. Its function is as follows. Binds as a ligand to a family of frizzled seven-transmembrane receptors and acts through a cascade of genes on the nucleus. Segment polarity protein. May function in gonadogenesis and limb development. Wg and Wnt2 have a role in the developing trachea and together are responsible for all dorsal trunk formation. This is Protein Wnt-2 (Wnt2) from Drosophila melanogaster (Fruit fly).